Reading from the N-terminus, the 228-residue chain is MAKRATRARPGRGRFITFEGGEGSGKSTQIQLLAERLKGQGIETLVTREPGGSPGAEIVRHLLLSGVGKLLGADAETLLFAAARDDHVHQVIEPALKKGVWVLCDRFTDSTAAYQGAAGKVDAAFIEALTHATIGDLEPDLTLILDVPVAVGLHRAIKRRGKAVADRFEQESLSFHESLRDAYRKIAADNPKRCAVVDANADAATVSERIWETMQHRLASALPARARA.

20-27 (GGEGSGKS) serves as a coordination point for ATP.

Belongs to the thymidylate kinase family.

It catalyses the reaction dTMP + ATP = dTDP + ADP. Phosphorylation of dTMP to form dTDP in both de novo and salvage pathways of dTTP synthesis. In Afipia carboxidovorans (strain ATCC 49405 / DSM 1227 / KCTC 32145 / OM5) (Oligotropha carboxidovorans), this protein is Thymidylate kinase.